Here is a 162-residue protein sequence, read N- to C-terminus: UPF0460 protein y4xD (162 aa).

This sequence belongs to the UPF0460 family.

In Sinorhizobium fredii (strain NBRC 101917 / NGR234), this protein is UPF0460 protein y4xD.